Consider the following 418-residue polypeptide: Cell division protein FtsZ (418 aa).

GTP-binding positions include 27–31 (GGGSN), 114–116 (GTG), Glu-145, Lys-149, and Asp-193. Residues 386–418 (KNGVKGHTFGVPLPSVNEDLDEPTFLRNRNKGL) are disordered.

It belongs to the FtsZ family. As to quaternary structure, homodimer. Polymerizes to form a dynamic ring structure in a strictly GTP-dependent manner. Interacts directly with several other division proteins.

It is found in the cytoplasm. Functionally, essential cell division protein that forms a contractile ring structure (Z ring) at the future cell division site. The regulation of the ring assembly controls the timing and the location of cell division. One of the functions of the FtsZ ring is to recruit other cell division proteins to the septum to produce a new cell wall between the dividing cells. Binds GTP and shows GTPase activity. The chain is Cell division protein FtsZ from Treponema pallidum (strain Nichols).